The primary structure comprises 663 residues: MSSRKELANAIRALSMDAVQKAKSGHPGAPMGMADIAEVLWRDFLKHNPQNPSWADRDRFVLSNGHGSMLIYSLLHLTGYDLPMEELKNFRQLHSKTPGHPEVGYTAGVETTTGPLGQGIANAVGMAIAEKTLAAQFNRPGHDIVDHYTYAFMGDGCMMEGISHEVCSLAGTLKLGKLIAFYDDNGISIDGHVEGWFTDDTAMRFEAYGWHVIRDIDGHDAASIKRAVEEARAVTDKPSLLMCKTIIGFGSPNKAGTHDSHGAPLGDAEIALTREQLGWKYAPFEIPSEIYAQWDAKEAGQAKESAWNEKFAAYAKAYPQEAAEFTRRMKGEMPSDFDAKAKEFIAKLQANPAKIASRKASQNAIEAFGPLLPEFLGGSADLAPSNLTLWSGSKAINEDAAGNYIHYGVREFGMTAIANGISLHGGFLPYTSTFLMFVEYARNAVRMAALMKQRQVMVYTHDSIGLGEDGPTHQPVEQVASLRVTPNMSTWRPCDQVESAVAWKYGVERQDGPTALILSRQNLAQQERTEEQLANIARGGYVLKDCAGQPELIFIATGSEVELAVAAYEKLTAEGVKARVVSMPSTDAFDKQDAAYRESVLPKAVTARVAVEAGIADYWYKYVGLNGAIVGMTTFGESAPAELLFEEFGFTVDNVVAKAKELL.

His26 contributes to the substrate binding site. An N6-acetyllysine modification is found at Lys46. Thiamine diphosphate-binding positions include His66 and 114–116; that span reads GPL. Residue Asp155 coordinates Mg(2+). The thiamine diphosphate site is built by Gly156 and Asn185. Asn185 and Ile187 together coordinate Mg(2+). Substrate is bound by residues His261, Arg358, and Ser385. Residue His261 participates in thiamine diphosphate binding. Glu411 (proton donor) is an active-site residue. Phe437 contacts thiamine diphosphate. His461, Asp469, His473, and Arg520 together coordinate substrate.

The protein belongs to the transketolase family. In terms of assembly, homodimer. The cofactor is Mg(2+). Ca(2+) is required as a cofactor. It depends on Mn(2+) as a cofactor. Requires Co(2+) as cofactor. Thiamine diphosphate serves as cofactor.

The enzyme catalyses D-sedoheptulose 7-phosphate + D-glyceraldehyde 3-phosphate = aldehydo-D-ribose 5-phosphate + D-xylulose 5-phosphate. In terms of biological role, catalyzes the transfer of a two-carbon ketol group from a ketose donor to an aldose acceptor, via a covalent intermediate with the cofactor thiamine pyrophosphate. Thus, catalyzes the reversible transfer of a two-carbon ketol group from sedoheptulose-7-phosphate to glyceraldehyde-3-phosphate, producing xylulose-5-phosphate and ribose-5-phosphate. This is Transketolase 1 (tktA) from Escherichia coli (strain K12).